A 1770-amino-acid polypeptide reads, in one-letter code: Transposon Ty2-DR3 Gag-Pol polyprotein (1770 aa).

Composition is skewed to polar residues over residues 1–11, 19–39, 49–60, 366–390, 399–408, and 415–435; these read MESQQLHQNPH, ASVTSKEVPSNQDPLAVSASN, KVNSQQETTPGT, VSRTSPNTTNTKVTSRNYHRTNSSK, IATSSKFSRV, and ESTVSSQYLSDDNELSLGQQQ. 2 disordered regions span residues 1-89 and 355-449; these read MESQ…QQHG and SQYK…SNDE. The segment at 295-397 is RNA-binding; the sequence is ENNINVSDRL…SSKPRAAKAH (103 aa). The For protease activity; shared with dimeric partner role is filled by Asp457. The interval 579–636 is integrase-type zinc finger-like; that stretch reads NVNKSKSVNKYPYPLIHRMLGHANFRSIQKSLKKNAVTYLKESDIEWSNASTYQCPDC. The Integrase catalytic domain maps to 656–831; the sequence is ESYEPFQYLH…AGLDITTILP (176 aa). Positions 667 and 732 each coordinate Mg(2+). Disordered regions lie at residues 1005–1038 and 1057–1205; these read GGTIESDTTSPRHSSTFTARNQKRPGSPNDMIDL and GGTE…TEIE. Composition is skewed to polar residues over residues 1009-1024 and 1065-1082; these read ESDTTSPRHSSTFTAR and QRNSDTNIKYRTTNSTPS. Positions 1193–1227 match the Bipartite nuclear localization signal motif; the sequence is KKRSLEDNETEIEVSRDTWNNKNMRSLEPPRSKKR. The region spanning 1353 to 1491 is the Reverse transcriptase Ty1/copia-type domain; that stretch reads NDYYITQLDI…DILGLEIKYQ (139 aa). Residues Asp1361, Asp1442, Asp1443, Asp1625, Glu1667, and Asp1700 each coordinate Mg(2+). The region spanning 1625 to 1767 is the RNase H Ty1/copia-type domain; it reads DASYGNQPYY…IKTFKLLTNK (143 aa).

As to quaternary structure, the capsid protein forms a homotrimer, from which the VLPs are assembled. The protease is a homodimer, whose active site consists of two apposed aspartic acid residues. Post-translationally, initially, virus-like particles (VLPs) are composed of the structural unprocessed proteins Gag and Gag-Pol, and also contain the host initiator methionine tRNA (tRNA(i)-Met) which serves as a primer for minus-strand DNA synthesis, and a dimer of genomic Ty RNA. Processing of the polyproteins occurs within the particle and proceeds by an ordered pathway, called maturation. First, the protease (PR) is released by autocatalytic cleavage of the Gag-Pol polyprotein, and this cleavage is a prerequisite for subsequent processing at the remaining sites to release the mature structural and catalytic proteins. Maturation takes place prior to the RT reaction and is required to produce transposition-competent VLPs.

It is found in the cytoplasm. It localises to the nucleus. It carries out the reaction DNA(n) + a 2'-deoxyribonucleoside 5'-triphosphate = DNA(n+1) + diphosphate. The enzyme catalyses Endonucleolytic cleavage to 5'-phosphomonoester.. In terms of biological role, capsid protein (CA) is the structural component of the virus-like particle (VLP), forming the shell that encapsulates the retrotransposons dimeric RNA genome. The particles are assembled from trimer-clustered units and there are holes in the capsid shells that allow for the diffusion of macromolecules. CA also has nucleocapsid-like chaperone activity, promoting primer tRNA(i)-Met annealing to the multipartite primer-binding site (PBS), dimerization of Ty2 RNA and initiation of reverse transcription. Functionally, the aspartyl protease (PR) mediates the proteolytic cleavages of the Gag and Gag-Pol polyproteins after assembly of the VLP. Its function is as follows. Reverse transcriptase/ribonuclease H (RT) is a multifunctional enzyme that catalyzes the conversion of the retro-elements RNA genome into dsDNA within the VLP. The enzyme displays a DNA polymerase activity that can copy either DNA or RNA templates, and a ribonuclease H (RNase H) activity that cleaves the RNA strand of RNA-DNA heteroduplexes during plus-strand synthesis and hydrolyzes RNA primers. The conversion leads to a linear dsDNA copy of the retrotransposon that includes long terminal repeats (LTRs) at both ends. Integrase (IN) targets the VLP to the nucleus, where a subparticle preintegration complex (PIC) containing at least integrase and the newly synthesized dsDNA copy of the retrotransposon must transit the nuclear membrane. Once in the nucleus, integrase performs the integration of the dsDNA into the host genome. The sequence is that of Transposon Ty2-DR3 Gag-Pol polyprotein (TY2B-DR3) from Saccharomyces cerevisiae (strain ATCC 204508 / S288c) (Baker's yeast).